We begin with the raw amino-acid sequence, 544 residues long: Phenylalanine--tRNA ligase beta subunit (544 aa).

In terms of domain architecture, B5 spans 270–346 (LEPKTRFLTK…KGYGYENIKV (77 aa)). The Mg(2+) site is built by Asp324, Asp330, Glu333, and Asp334.

Belongs to the phenylalanyl-tRNA synthetase beta subunit family. Type 2 subfamily. As to quaternary structure, tetramer of two alpha and two beta subunits. Requires Mg(2+) as cofactor.

Its subcellular location is the cytoplasm. The catalysed reaction is tRNA(Phe) + L-phenylalanine + ATP = L-phenylalanyl-tRNA(Phe) + AMP + diphosphate + H(+). This Methanosarcina barkeri (strain Fusaro / DSM 804) protein is Phenylalanine--tRNA ligase beta subunit.